Consider the following 294-residue polypeptide: N-acetylmuramic acid 6-phosphate etherase (294 aa).

The SIS domain maps to 54–217 (VIQSFEEEGR…STASMIGVGK (164 aa)). Catalysis depends on glutamate 82, which acts as the Proton donor. Glutamate 113 is a catalytic residue.

It belongs to the GCKR-like family. MurNAc-6-P etherase subfamily. Homodimer.

It carries out the reaction N-acetyl-D-muramate 6-phosphate + H2O = N-acetyl-D-glucosamine 6-phosphate + (R)-lactate. Its pathway is amino-sugar metabolism; N-acetylmuramate degradation. Specifically catalyzes the cleavage of the D-lactyl ether substituent of MurNAc 6-phosphate, producing GlcNAc 6-phosphate and D-lactate. The chain is N-acetylmuramic acid 6-phosphate etherase from Bacillus cereus (strain 03BB102).